Consider the following 500-residue polypeptide: Glutamate decarboxylase 3 (500 aa).

Ser-8 is modified (phosphoserine). At Lys-277 the chain carries N6-(pyridoxal phosphate)lysine.

Belongs to the group II decarboxylase family. Homohexamer. Interacts with calmodulin. Pyridoxal 5'-phosphate is required as a cofactor. As to expression, expressed at low levels in siliques.

The catalysed reaction is L-glutamate + H(+) = 4-aminobutanoate + CO2. Catalyzes the production of GABA. The calmodulin-binding is calcium-dependent and it is proposed that this may, directly or indirectly, form a calcium regulated control of GABA biosynthesis. The chain is Glutamate decarboxylase 3 (GAD3) from Arabidopsis thaliana (Mouse-ear cress).